The sequence spans 150 residues: Large ribosomal subunit protein bL9 (150 aa).

The protein belongs to the bacterial ribosomal protein bL9 family.

In terms of biological role, binds to the 23S rRNA. This Neisseria gonorrhoeae protein is Large ribosomal subunit protein bL9.